The chain runs to 592 residues: Probable tubulin polyglutamylase TTLL2 (592 aa).

Disordered stretches follow at residues methionine 1–proline 23 and glycine 51–aspartate 77. Over residues cysteine 7–proline 23 the composition is skewed to polar residues. In terms of domain architecture, TTL spans leucine 84 to alanine 427. ATP contacts are provided by residues lysine 212, arginine 218 to glycine 219, glutamine 240 to isoleucine 243, and lysine 253 to aspartate 255. A protein is bound at residue arginine 218. An L-glutamate-binding site is contributed by arginine 279. Threonine 298–asparagine 299 contributes to the ATP binding site. L-glutamate-binding residues include serine 301 and lysine 321. Mg(2+)-binding residues include aspartate 373, glutamate 386, and asparagine 388. Lysine 404 serves as a coordination point for L-glutamate.

Belongs to the tubulin--tyrosine ligase family. Mg(2+) is required as a cofactor. Testis.

Probable tubulin polyglutamylase that generates side chains of glutamate on the gamma-carboxyl group of specific glutamate residues within the C-terminal tail of target proteins. Similar to TTLL1, may acquire enzymatic activity only in complex with other proteins as it is most likely lacking domains important for autonomous activity. Probably involved in the side-chain initiation step of the polyglutamylation reaction rather than the elongation step. This is Probable tubulin polyglutamylase TTLL2 from Homo sapiens (Human).